Consider the following 72-residue polypeptide: Translation initiation factor IF-1 (72 aa).

An S1-like domain is found at 1 to 72 (MAKDDVIEID…DKGRITFRYK (72 aa)).

The protein belongs to the IF-1 family. As to quaternary structure, component of the 30S ribosomal translation pre-initiation complex which assembles on the 30S ribosome in the order IF-2 and IF-3, IF-1 and N-formylmethionyl-tRNA(fMet); mRNA recruitment can occur at any time during PIC assembly.

Its subcellular location is the cytoplasm. One of the essential components for the initiation of protein synthesis. Stabilizes the binding of IF-2 and IF-3 on the 30S subunit to which N-formylmethionyl-tRNA(fMet) subsequently binds. Helps modulate mRNA selection, yielding the 30S pre-initiation complex (PIC). Upon addition of the 50S ribosomal subunit IF-1, IF-2 and IF-3 are released leaving the mature 70S translation initiation complex. The polypeptide is Translation initiation factor IF-1 (Campylobacter jejuni subsp. doylei (strain ATCC BAA-1458 / RM4099 / 269.97)).